We begin with the raw amino-acid sequence, 102 residues long: Small ribosomal subunit protein uS10 (102 aa).

The protein belongs to the universal ribosomal protein uS10 family. In terms of assembly, part of the 30S ribosomal subunit.

Functionally, involved in the binding of tRNA to the ribosomes. The sequence is that of Small ribosomal subunit protein uS10 from Bartonella tribocorum (strain CIP 105476 / IBS 506).